Reading from the N-terminus, the 315-residue chain is Porphobilinogen deaminase (315 aa).

Cys251 is subject to S-(dipyrrolylmethanemethyl)cysteine.

This sequence belongs to the HMBS family. In terms of assembly, monomer. Dipyrromethane serves as cofactor.

The catalysed reaction is 4 porphobilinogen + H2O = hydroxymethylbilane + 4 NH4(+). The protein operates within porphyrin-containing compound metabolism; protoporphyrin-IX biosynthesis; coproporphyrinogen-III from 5-aminolevulinate: step 2/4. In terms of biological role, tetrapolymerization of the monopyrrole PBG into the hydroxymethylbilane pre-uroporphyrinogen in several discrete steps. The protein is Porphobilinogen deaminase of Sphingopyxis alaskensis (strain DSM 13593 / LMG 18877 / RB2256) (Sphingomonas alaskensis).